The sequence spans 399 residues: Dual-specificity RNA methyltransferase RlmN (399 aa).

Glu-122 acts as the Proton acceptor in catalysis. A Radical SAM core domain is found at 128 to 371 (ETDRGTLCVS…VRTPRGRDIL (244 aa)). Cys-135 and Cys-374 are oxidised to a cystine. The [4Fe-4S] cluster site is built by Cys-142, Cys-146, and Cys-149. S-adenosyl-L-methionine is bound by residues 200–201 (GE), Ser-232, 254–256 (SLH), and Asn-331. The active-site S-methylcysteine intermediate is Cys-374.

Belongs to the radical SAM superfamily. RlmN family. [4Fe-4S] cluster is required as a cofactor.

It is found in the cytoplasm. It carries out the reaction adenosine(2503) in 23S rRNA + 2 reduced [2Fe-2S]-[ferredoxin] + 2 S-adenosyl-L-methionine = 2-methyladenosine(2503) in 23S rRNA + 5'-deoxyadenosine + L-methionine + 2 oxidized [2Fe-2S]-[ferredoxin] + S-adenosyl-L-homocysteine. The enzyme catalyses adenosine(37) in tRNA + 2 reduced [2Fe-2S]-[ferredoxin] + 2 S-adenosyl-L-methionine = 2-methyladenosine(37) in tRNA + 5'-deoxyadenosine + L-methionine + 2 oxidized [2Fe-2S]-[ferredoxin] + S-adenosyl-L-homocysteine. Functionally, specifically methylates position 2 of adenine 2503 in 23S rRNA and position 2 of adenine 37 in tRNAs. m2A2503 modification seems to play a crucial role in the proofreading step occurring at the peptidyl transferase center and thus would serve to optimize ribosomal fidelity. This chain is Dual-specificity RNA methyltransferase RlmN, found in Rhodopseudomonas palustris (strain BisB18).